The primary structure comprises 185 residues: MAEAKYEPRLKKEYVERIRKAMQEQFSYANEMMIPKLDKIVINMGVGEATADSKKPTVAAADLAAIAGQKPVITRARNSIAGFKVREQMPIGAKVTLRGARMYEFLDRLVNIALPRVRDFRGLNPKSFDGRGNFAMGIKEHIVFLEINYDKVDQMWGMDIIVCTTATTDDEARALLKEFSFPFRQ.

The protein belongs to the universal ribosomal protein uL5 family. Part of the 50S ribosomal subunit; part of the 5S rRNA/L5/L18/L25 subcomplex. Contacts the 5S rRNA and the P site tRNA. Forms a bridge to the 30S subunit in the 70S ribosome.

This is one of the proteins that bind and probably mediate the attachment of the 5S RNA into the large ribosomal subunit, where it forms part of the central protuberance. In the 70S ribosome it contacts protein S13 of the 30S subunit (bridge B1b), connecting the 2 subunits; this bridge is implicated in subunit movement. Contacts the P site tRNA; the 5S rRNA and some of its associated proteins might help stabilize positioning of ribosome-bound tRNAs. This chain is Large ribosomal subunit protein uL5, found in Rhizobium leguminosarum bv. trifolii (strain WSM2304).